Reading from the N-terminus, the 333-residue chain is Protein FanF (333 aa).

The first 22 residues, 1-22, serve as a signal peptide directing secretion; the sequence is MKNKYNLLFFLFLLCYGDVALA.

Three disulfide bonds are present.

It is found in the fimbrium. In terms of biological role, minor component of K99 fimbriae. Is not required for binding of K99 fimbriae to the ganglioside receptor. May play a role in initiation, elongation and flexibility of the fimbriae. The protein is Protein FanF (fanF) of Escherichia coli.